The primary structure comprises 579 residues: Matrix metalloproteinase-C (579 aa).

Positions Met-1–Ala-17 are cleaved as a signal peptide. Positions Gly-18–Leu-129 are cleaved as a propeptide — activation peptide. The interval Asn-32–Ser-51 is disordered. The segment covering Ser-33–Pro-50 has biased composition (low complexity). A Cysteine switch motif is present at residues Ser-120–Ala-127. 5 residues coordinate Zn(2+): Cys-122, His-200, Asp-202, His-215, and His-225. Asn-231 is a glycosylation site (N-linked (GlcNAc...) asparagine). His-254 lines the Zn(2+) pocket. The active site involves Glu-255. 2 residues coordinate Zn(2+): His-258 and His-264. The segment at Ser-307–Cys-394 is disordered. Residues Asp-315–Ser-324 show a composition bias toward gly residues. Residues Arg-325–Phe-341 show a composition bias toward low complexity. Over residues Trp-373 to Cys-394 the composition is skewed to gly residues. 2 Hemopexin repeats span residues Pro-395–Ala-437 and Pro-438–Ser-490.

It belongs to the peptidase M10A family. Zn(2+) is required as a cofactor.

It is found in the secreted. Its subcellular location is the extracellular space. The protein resides in the extracellular matrix. Its activity is regulated as follows. Inhibited by human TIMP1 and TIMP2 and the broad MMP inhibitors BB94 (Batimastat) and CT543. Functionally, metalloproteinase. The sequence is that of Matrix metalloproteinase-C from Caenorhabditis elegans.